The chain runs to 300 residues: Ribosomal RNA small subunit methyltransferase H (300 aa).

Residues 43–45 (AGH), D60, D105, and Q112 each bind S-adenosyl-L-methionine.

Belongs to the methyltransferase superfamily. RsmH family.

It is found in the cytoplasm. The catalysed reaction is cytidine(1402) in 16S rRNA + S-adenosyl-L-methionine = N(4)-methylcytidine(1402) in 16S rRNA + S-adenosyl-L-homocysteine + H(+). Functionally, specifically methylates the N4 position of cytidine in position 1402 (C1402) of 16S rRNA. The chain is Ribosomal RNA small subunit methyltransferase H from Deinococcus deserti (strain DSM 17065 / CIP 109153 / LMG 22923 / VCD115).